Reading from the N-terminus, the 331-residue chain is ESX-3 secretion system protein EccE3 (331 aa).

2 consecutive transmembrane segments (helical) span residues 11–31 (GRVTLVLLAVVPVALAYPWQS) and 37–57 (LLGVAAAVVIGLFGFWRGLYF).

Belongs to the EccE family. As to quaternary structure, part of the ESX-3 / type VII secretion system (T7SS), which is composed of cytosolic and membrane components. The ESX-3 membrane complex is composed of EccB3, EccC3, EccD3 and EccE3.

It localises to the cell inner membrane. Part of the ESX-3 specialized secretion system, which is important for iron and zinc uptake or homeostasis. This Mycobacterium tuberculosis (strain CDC 1551 / Oshkosh) protein is ESX-3 secretion system protein EccE3.